The sequence spans 1390 residues: ABC transporter G family member 43 (1390 aa).

The tract at residues 1–22 (MTMPQTDGVEFASRNNLENGDG) is disordered. The 275-residue stretch at 137–411 (SKLSRFTFSK…FEDCGFKCPQ (275 aa)) folds into the ABC transporter 1 domain. 171 to 178 (GPPGCGKT) is an ATP binding site. Positions 489–701 (DMFKACSRRE…AEIGLTSNEF (213 aa)) constitute an ABC transmembrane type-2 1 domain. 6 consecutive transmembrane segments (helical) span residues 507–527 (FVYV…MTVY), 541–561 (YLLG…LPEL), 594–614 (IPIS…VIGY), 626–646 (LILF…GAVF), 651–671 (VATT…GFIV), and 737–757 (FGAL…ALTF). The 246-residue stretch at 798 to 1043 (FTFQDVQYFI…VIEYFMSIPG (246 aa)) folds into the ABC transporter 2 domain. 835–842 (GVSGAGKT) is an ATP binding site. Residues 1115 to 1329 (EQFKACLWKQ…VLNGLLTSQY (215 aa)) enclose the ABC transmembrane type-2 2 domain. 7 helical membrane-spanning segments follow: residues 1134–1154 (YNLT…ILFL), 1173–1193 (MFTV…FCVA), 1218–1238 (VLVE…IVYP), 1253–1273 (FYSI…LVVV), 1279–1299 (IAFT…GYVM), 1307–1327 (WWIW…LLTS), and 1362–1382 (LVAV…AFFI).

It belongs to the ABC transporter superfamily. ABCG family. PDR (TC 3.A.1.205) subfamily.

Its subcellular location is the membrane. Its function is as follows. May be a general defense protein. The sequence is that of ABC transporter G family member 43 (ABCG43) from Arabidopsis thaliana (Mouse-ear cress).